The chain runs to 547 residues: MDAQHLMTMSGISLEQVAIMGCSLGTGLLVSMIIYNYFFHPLARVPGPCTGAIFPFWSMSSLYRRRLNPDLAELHKKYGQILSLLSGYGGLLMCPRNTGPIVRVGPNQLSFATVEAQKMIYNAKPTHTGSDELFGRDGTLQDVLLSMILGAANIGSLSNRAEHKKMRKRLQPGFTSKALFEQESLLRMHMDRLLQGLAQDTGVIDLTEYFSRFLWDLIGDLSFGEPLVPEKHGRRTDTLRSLVGVYQGCFPILEAINYAVPQIEGVLKLALQLVPPATLRAVLPSATFREYDHPAINSHTTPLQCCINRQDGRSDFLTHIMGDKSSNPTELELSYDELHSNATVLMIAGYKTTETSLSALFYRLLSTPGVLEKLQTELFSNFQSIDEITGKKLLSLPYLNGCVNESLRLTPAVAGKFASRRSPGAIIEGFYVPSGTEVYTETYTMQRSPQYWHAPDEYRPERWFERGEGSPYAQDVHEAFKPFSSGPRACLGREMALQTLRLTAALLVYRFHLKIVNEDRFVWEQDTDSRMIYSKYHIKAIVQERLT.

Residues 19–39 (IMGCSLGTGLLVSMIIYNYFF) traverse the membrane as a helical segment. N-linked (GlcNAc...) asparagine glycans are attached at residues N341 and N404. C490 contributes to the heme binding site.

The protein belongs to the cytochrome P450 family. It depends on heme as a cofactor.

The protein resides in the membrane. It catalyses the reaction sesterfisherol + 3 reduced [NADPH--hemoprotein reductase] + 3 O2 = sesterfisherate + 3 oxidized [NADPH--hemoprotein reductase] + 4 H2O + 4 H(+). It participates in secondary metabolite biosynthesis; terpenoid biosynthesis. Cytochrome P450 monooxygenase; part of the gene cluster that mediates the biosynthesis of sesterfisheric acid. The bifunctional terpene synthase NfSS converts DMAPP and IPP, and also GGPP, into sesterfisherol. The C-terminal prenyltransferase (PT) domain of NfSS catalyzes formation of GFPP, whereas the N-terminal terpene cyclase (TC) domain catalyzes the cyclization of GFPP to sesterfisherol. The cytochrome P450 monooxygenase NfP450 then catalyzes oxidative modifications of sesterfisherol into sesterfisheric acid. The protein is Sesterfisheric acid synthase of Neosartorya fischeri (strain ATCC 1020 / DSM 3700 / CBS 544.65 / FGSC A1164 / JCM 1740 / NRRL 181 / WB 181) (Aspergillus fischerianus).